We begin with the raw amino-acid sequence, 295 residues long: Cytidine deaminase (295 aa).

2 consecutive CMP/dCMP-type deaminase domains span residues 48–168 (TDNQ…FGPS) and 187–295 (EDDD…YLSL). Substrate is bound at residue 89–91 (NME). His-102 is a Zn(2+) binding site. Glu-104 (proton donor) is an active-site residue. Zn(2+) contacts are provided by Cys-129 and Cys-132.

It belongs to the cytidine and deoxycytidylate deaminase family. As to quaternary structure, homodimer. Zn(2+) serves as cofactor.

The enzyme catalyses cytidine + H2O + H(+) = uridine + NH4(+). It carries out the reaction 2'-deoxycytidine + H2O + H(+) = 2'-deoxyuridine + NH4(+). Functionally, this enzyme scavenges exogenous and endogenous cytidine and 2'-deoxycytidine for UMP synthesis. The polypeptide is Cytidine deaminase (Vibrio vulnificus (strain YJ016)).